The sequence spans 237 residues: MSDSQPCSTPSTRGKSDSGYIPGDDTWTQWRNIFAILTGQMTDEGKEQFRIARDIRNEAADCKRCEDQRDYLLQYSPIIRFLSDNIRQLRGDLSSHNIYCRRCTSRKAGGFDPEYGILLCANEMKDQGHLEDTMAHEMVHAYDHLRFKVDWTDNLRHAACTEIRASSLSGECRWAREFFRRGQWKFTQQHQECVRRRAILSVRARPGCKDEAHAEKVVNEVWDSCFRDTRPFDEIYR.

Polar residues predominate over residues 1-13 (MSDSQPCSTPSTR). The tract at residues 1–23 (MSDSQPCSTPSTRGKSDSGYIPG) is disordered. Residue histidine 136 participates in a divalent metal cation binding. The active site involves glutamate 137. A divalent metal cation is bound at residue histidine 140.

The protein belongs to the peptidase M76 family.

It localises to the mitochondrion inner membrane. Functionally, has a dual role in the assembly of mitochondrial ATPase. Acts as a protease that removes N-terminal residues of mitochondrial ATPase CF(0) subunit 6 at the intermembrane space side. Also involved in the correct assembly of the membrane-embedded ATPase CF(0) particle, probably mediating association of subunit 6 with the subunit 9 ring. The chain is Mitochondrial inner membrane protease atp23 (atp23) from Aspergillus fumigatus (strain ATCC MYA-4609 / CBS 101355 / FGSC A1100 / Af293) (Neosartorya fumigata).